A 314-amino-acid polypeptide reads, in one-letter code: Nodulation protein D 1 (314 aa).

Positions 6 to 63 (LDLNLLVALDALMTERNLTAAARKIHLSQPAMSAAVARLRTYFGDELFTMRGRELVPT) constitute an HTH lysR-type domain. The segment at residues 23 to 42 (LTAAARKIHLSQPAMSAAVA) is a DNA-binding region (H-T-H motif).

This sequence belongs to the LysR transcriptional regulatory family.

Functionally, nodD regulates the expression of the nodABCFE genes which encode other nodulation proteins. NodD is also a negative regulator of its own expression. Binds flavonoids as inducers. This is Nodulation protein D 1 (nodD1) from Bradyrhizobium sp. (strain NC92).